Reading from the N-terminus, the 301-residue chain is Probable alpha-L-glutamate ligase (301 aa).

In terms of domain architecture, ATP-grasp spans 104–287; it reads LQLLSRKGIG…IAGMIIEYIE (184 aa). ATP contacts are provided by residues Lys-141, 178–179, Asp-187, and 211–213; these read EY and RSN. Mg(2+) is bound by residues Asp-248, Glu-260, and Asn-262. Mn(2+) is bound by residues Asp-248, Glu-260, and Asn-262.

The protein belongs to the RimK family. It depends on Mg(2+) as a cofactor. Mn(2+) is required as a cofactor.

The chain is Probable alpha-L-glutamate ligase from Methanococcoides burtonii (strain DSM 6242 / NBRC 107633 / OCM 468 / ACE-M).